Here is a 225-residue protein sequence, read N- to C-terminus: MAITDSDLDLAQYIDHSLLIPTATSEQLEAYCQQAEQYRFPTVCVYPAAVKQAVQLLHGKKTLVSTVIGFPAGATTSAVKRYEALEAVDNGAKELDVVINLGWLKDGKSEQLFQEIASICQETGQTVKAILETSQLTDTEKRLAAEICMDAGVSYLKTSTGWFGGATVSDVKFLKEISKGRVGIKASGGIRTLEQAIALIRAGATRLGTSRGVDLVRQQKAAFEE.

The Proton donor/acceptor role is filled by Asp96. Lys157 serves as the catalytic Schiff-base intermediate with acetaldehyde. Lys185 (proton donor/acceptor) is an active-site residue.

This sequence belongs to the DeoC/FbaB aldolase family. DeoC type 1 subfamily.

It is found in the cytoplasm. It catalyses the reaction 2-deoxy-D-ribose 5-phosphate = D-glyceraldehyde 3-phosphate + acetaldehyde. Its pathway is carbohydrate degradation; 2-deoxy-D-ribose 1-phosphate degradation; D-glyceraldehyde 3-phosphate and acetaldehyde from 2-deoxy-alpha-D-ribose 1-phosphate: step 2/2. Catalyzes a reversible aldol reaction between acetaldehyde and D-glyceraldehyde 3-phosphate to generate 2-deoxy-D-ribose 5-phosphate. This chain is Deoxyribose-phosphate aldolase, found in Microcystis aeruginosa (strain NIES-843 / IAM M-2473).